Consider the following 630-residue polypeptide: Plastin-3 (630 aa).

2 consecutive EF-hand domains span residues 12–47 (DELD…ANMP) and 52–87 (KVRE…VKSS). Residues D25, N27, N29, E36, D65, N67, D69, K71, and E76 each coordinate Ca(2+). 2 actin-binding regions span residues 109-382 (TSEL…ALTK) and 383-627 (PENQ…GRGM). 2 consecutive Calponin-homology (CH) domains span residues 123-239 (EEEK…KIGL) and 267-378 (LSPE…NKYP). Phosphoserine occurs at positions 268, 293, 326, and 339. Phosphothreonine is present on T391. Calponin-homology (CH) domains lie at 397–506 (TREE…RRYT) and 518–627 (KAND…GRGM).

Monomer.

The protein localises to the cytoplasm. Functionally, actin-bundling protein. The chain is Plastin-3 (PLS3) from Bos taurus (Bovine).